Reading from the N-terminus, the 393-residue chain is Pre-mRNA-splicing regulator WTAP (393 aa).

Residues 240 to 393 (QQQIQTSGNR…SSVNVQGSVL (154 aa)) form a disordered region. Positions 254–267 (ESKDEGETSGKDCG) are enriched in basic and acidic residues. Residues 272-286 (GPSNGGSSHQRTHSS) are compositionally biased toward polar residues. Basic and acidic residues predominate over residues 310-319 (LPNHSEERTS). Positions 320-353 (RGGSSYMNQLSTGYESVDSPTGSENSLTHQSNDT) are enriched in polar residues. The span at 354–365 (DSNHDSQEEKPV) shows a compositional bias: basic and acidic residues. A compositionally biased stretch (polar residues) spans 369–393 (GNRTVSSRHLQNGLDSSVNVQGSVL).

The protein belongs to the fl(2)d family. As to quaternary structure, component of the WMM complex, a N6-methyltransferase complex composed of a catalytic subcomplex, named MAC, and of an associated subcomplex, named MACOM. Component of the MACOM subcomplex.

The protein resides in the nucleus speckle. It localises to the nucleus. Its subcellular location is the nucleoplasm. Associated component of the WMM complex, a complex that mediates N6-methyladenosine (m6A) methylation of RNAs, a modification that plays a role in the efficiency of mRNA splicing and RNA processing. In Xenopus tropicalis (Western clawed frog), this protein is Pre-mRNA-splicing regulator WTAP.